Reading from the N-terminus, the 274-residue chain is tRNA-cytidine(32) 2-sulfurtransferase (274 aa).

The short motif at 40–45 is the PP-loop motif element; sequence SGGKDS. [4Fe-4S] cluster-binding residues include cysteine 115, cysteine 118, and cysteine 206.

The protein belongs to the TtcA family. As to quaternary structure, homodimer. The cofactor is Mg(2+). [4Fe-4S] cluster serves as cofactor.

The protein localises to the cytoplasm. The catalysed reaction is cytidine(32) in tRNA + S-sulfanyl-L-cysteinyl-[cysteine desulfurase] + AH2 + ATP = 2-thiocytidine(32) in tRNA + L-cysteinyl-[cysteine desulfurase] + A + AMP + diphosphate + H(+). It participates in tRNA modification. Its function is as follows. Catalyzes the ATP-dependent 2-thiolation of cytidine in position 32 of tRNA, to form 2-thiocytidine (s(2)C32). The sulfur atoms are provided by the cysteine/cysteine desulfurase (IscS) system. The protein is tRNA-cytidine(32) 2-sulfurtransferase of Pseudomonas syringae pv. syringae (strain B728a).